We begin with the raw amino-acid sequence, 475 residues long: Squamosa promoter-binding-like protein 12 (475 aa).

The disordered stretch occupies residues 49–73 (NHGSTNSSGGTFTSSSELANGSSKS). Residues 51–73 (GSTNSSGGTFTSSSELANGSSKS) are compositionally biased toward low complexity. Residues 177–254 (SSYCQVEGCK…SDHNARRRKP (78 aa)) form an SBP-type zinc finger. Zn(2+) is bound by residues C180, C185, C202, H205, C221, C224, H228, and C240. A Bipartite nuclear localization signal motif is present at residues 237-253 (KKSCRRRLSDHNARRRK). A disordered region spans residues 437–475 (GGGGFWQDGDDPPPLDHASQAQAFMHPGNGSSSGYGHLH). The span at 465 to 475 (NGSSSGYGHLH) shows a compositional bias: polar residues.

Expressed in young panicles.

Its subcellular location is the nucleus. Trans-acting factor that binds specifically to the consensus nucleotide sequence 5'-TNCGTACAA-3'. May be involved in panicle development. This Oryza sativa subsp. indica (Rice) protein is Squamosa promoter-binding-like protein 12 (SPL12).